The sequence spans 335 residues: Holliday junction branch migration complex subunit RuvB (335 aa).

Residues 4–184 (ADRIISGQAK…FGIVQRLEFY (181 aa)) form a large ATPase domain (RuvB-L) region. ATP-binding positions include I23, R24, G65, K68, T69, T70, 131–133 (EDY), R174, Y184, and R221. T69 contributes to the Mg(2+) binding site. Residues 185–255 (SVEDLTSIVA…VAKQALSMLD (71 aa)) are small ATPAse domain (RuvB-S). A head domain (RuvB-H) region spans residues 258 to 335 (DAGFDYLDRK…RHFGLQKLSD (78 aa)). DNA is bound by residues R294, R313, and R318.

Belongs to the RuvB family. Homohexamer. Forms an RuvA(8)-RuvB(12)-Holliday junction (HJ) complex. HJ DNA is sandwiched between 2 RuvA tetramers; dsDNA enters through RuvA and exits via RuvB. An RuvB hexamer assembles on each DNA strand where it exits the tetramer. Each RuvB hexamer is contacted by two RuvA subunits (via domain III) on 2 adjacent RuvB subunits; this complex drives branch migration. In the full resolvosome a probable DNA-RuvA(4)-RuvB(12)-RuvC(2) complex forms which resolves the HJ.

The protein localises to the cytoplasm. It carries out the reaction ATP + H2O = ADP + phosphate + H(+). Its function is as follows. The RuvA-RuvB-RuvC complex processes Holliday junction (HJ) DNA during genetic recombination and DNA repair, while the RuvA-RuvB complex plays an important role in the rescue of blocked DNA replication forks via replication fork reversal (RFR). RuvA specifically binds to HJ cruciform DNA, conferring on it an open structure. The RuvB hexamer acts as an ATP-dependent pump, pulling dsDNA into and through the RuvAB complex. RuvB forms 2 homohexamers on either side of HJ DNA bound by 1 or 2 RuvA tetramers; 4 subunits per hexamer contact DNA at a time. Coordinated motions by a converter formed by DNA-disengaged RuvB subunits stimulates ATP hydrolysis and nucleotide exchange. Immobilization of the converter enables RuvB to convert the ATP-contained energy into a lever motion, pulling 2 nucleotides of DNA out of the RuvA tetramer per ATP hydrolyzed, thus driving DNA branch migration. The RuvB motors rotate together with the DNA substrate, which together with the progressing nucleotide cycle form the mechanistic basis for DNA recombination by continuous HJ branch migration. Branch migration allows RuvC to scan DNA until it finds its consensus sequence, where it cleaves and resolves cruciform DNA. This is Holliday junction branch migration complex subunit RuvB from Haemophilus influenzae (strain 86-028NP).